The sequence spans 387 residues: 4-hydroxy-3-methylbut-2-en-1-yl diphosphate synthase (flavodoxin) (387 aa).

[4Fe-4S] cluster-binding residues include Cys-272, Cys-275, Cys-307, and Glu-314.

It belongs to the IspG family. It depends on [4Fe-4S] cluster as a cofactor.

It carries out the reaction (2E)-4-hydroxy-3-methylbut-2-enyl diphosphate + oxidized [flavodoxin] + H2O + 2 H(+) = 2-C-methyl-D-erythritol 2,4-cyclic diphosphate + reduced [flavodoxin]. It participates in isoprenoid biosynthesis; isopentenyl diphosphate biosynthesis via DXP pathway; isopentenyl diphosphate from 1-deoxy-D-xylulose 5-phosphate: step 5/6. In terms of biological role, converts 2C-methyl-D-erythritol 2,4-cyclodiphosphate (ME-2,4cPP) into 1-hydroxy-2-methyl-2-(E)-butenyl 4-diphosphate. The polypeptide is 4-hydroxy-3-methylbut-2-en-1-yl diphosphate synthase (flavodoxin) (Granulibacter bethesdensis (strain ATCC BAA-1260 / CGDNIH1)).